The chain runs to 521 residues: Probable protein phosphatase 2C 16 (521 aa).

A PPM-type phosphatase domain is found at K21–F327. Mn(2+) is bound by residues D57, G58, Q276, and E318. The disordered stretch occupies residues A354–P431.

This sequence belongs to the PP2C family. Mg(2+) serves as cofactor. Mn(2+) is required as a cofactor.

The enzyme catalyses O-phospho-L-seryl-[protein] + H2O = L-seryl-[protein] + phosphate. The catalysed reaction is O-phospho-L-threonyl-[protein] + H2O = L-threonyl-[protein] + phosphate. This is Probable protein phosphatase 2C 16 from Oryza sativa subsp. japonica (Rice).